The chain runs to 401 residues: Chorismate synthase (401 aa).

Residues Arg-40 and Arg-46 each coordinate NADP(+). Residues 135 to 137, 256 to 257, Gly-300, 315 to 319, and Arg-341 contribute to the FMN site; these read RAS, QA, and KPIST.

It belongs to the chorismate synthase family. In terms of assembly, homotetramer. FMNH2 is required as a cofactor.

It catalyses the reaction 5-O-(1-carboxyvinyl)-3-phosphoshikimate = chorismate + phosphate. The protein operates within metabolic intermediate biosynthesis; chorismate biosynthesis; chorismate from D-erythrose 4-phosphate and phosphoenolpyruvate: step 7/7. Its function is as follows. Catalyzes the anti-1,4-elimination of the C-3 phosphate and the C-6 proR hydrogen from 5-enolpyruvylshikimate-3-phosphate (EPSP) to yield chorismate, which is the branch point compound that serves as the starting substrate for the three terminal pathways of aromatic amino acid biosynthesis. This reaction introduces a second double bond into the aromatic ring system. This is Chorismate synthase from Mycobacterium avium (strain 104).